The primary structure comprises 467 residues: UDP-N-acetylmuramate--L-alanine ligase (467 aa).

ATP is bound at residue glycine 114 to threonine 120.

The protein belongs to the MurCDEF family.

It is found in the cytoplasm. The catalysed reaction is UDP-N-acetyl-alpha-D-muramate + L-alanine + ATP = UDP-N-acetyl-alpha-D-muramoyl-L-alanine + ADP + phosphate + H(+). Its pathway is cell wall biogenesis; peptidoglycan biosynthesis. Functionally, cell wall formation. This chain is UDP-N-acetylmuramate--L-alanine ligase, found in Azorhizobium caulinodans (strain ATCC 43989 / DSM 5975 / JCM 20966 / LMG 6465 / NBRC 14845 / NCIMB 13405 / ORS 571).